Consider the following 575-residue polypeptide: Carboxylesterase 5A (575 aa).

Positions 1–27 (MSGEWGHLGQTLIWAVWVLAAATEGPA) are cleaved as a signal peptide. Asparagine 82 carries N-linked (GlcNAc...) asparagine glycosylation. Residues cysteine 94 and cysteine 121 are joined by a disulfide bond. Catalysis depends on serine 226, which acts as the Acyl-ester intermediate. Cysteine 280 and cysteine 291 are oxidised to a cystine. N-linked (GlcNAc...) asparagine glycosylation occurs at asparagine 281. Glutamate 345 (charge relay system) is an active-site residue. Asparagine 363 carries N-linked (GlcNAc...) asparagine glycosylation. Histidine 454 acts as the Charge relay system in catalysis. N-linked (GlcNAc...) asparagine glycosylation is present at asparagine 524.

This sequence belongs to the type-B carboxylesterase/lipase family. N-glycosylated.

The protein resides in the secreted. It catalyses the reaction a carboxylic ester + H2O = an alcohol + a carboxylate + H(+). Involved in the detoxification of xenobiotics and in the activation of ester and amide prodrugs. The polypeptide is Carboxylesterase 5A (CES5A) (Canis lupus familiaris (Dog)).